Consider the following 306-residue polypeptide: Protein translocase subunit SecF (306 aa).

The next 6 membrane-spanning stretches (helical) occupy residues 17–37, 134–154, 158–178, 185–205, 232–254, and 268–288; these read AFAV…TKGI, GLGM…RFQW, LGAI…LSFF, TVLA…IVIF, LLRT…FFGG, and VMAG…WLNL.

This sequence belongs to the SecD/SecF family. SecF subfamily. In terms of assembly, forms a complex with SecD. Part of the essential Sec protein translocation apparatus which comprises SecA, SecYEG and auxiliary proteins SecDF-YajC and YidC.

The protein resides in the cell inner membrane. In terms of biological role, part of the Sec protein translocase complex. Interacts with the SecYEG preprotein conducting channel. SecDF uses the proton motive force (PMF) to complete protein translocation after the ATP-dependent function of SecA. The protein is Protein translocase subunit SecF of Pseudomonas aeruginosa (strain ATCC 15692 / DSM 22644 / CIP 104116 / JCM 14847 / LMG 12228 / 1C / PRS 101 / PAO1).